The following is a 473-amino-acid chain: Probable DNA N(6)-methyladenine demethylase ALKBH1B (473 aa).

357 to 359 is a binding site for 2-oxoglutarate; that stretch reads NFY. Fe cation contacts are provided by His368, Asp391, and His449. Residue 461–465 participates in 2-oxoglutarate binding; the sequence is RLFFR.

It belongs to the alkB family. Fe(2+) serves as cofactor. In terms of tissue distribution, undetectable.

The enzyme catalyses an N(6)-methyl-2'-deoxyadenosine in DNA + 2-oxoglutarate + O2 = a 2'-deoxyadenosine in DNA + formaldehyde + succinate + CO2. Dioxygenase that may catalyzes DNA N(6)-methyladenine (6 mA) demethylation. Requires molecular oxygen, alpha-ketoglutarate and iron. The polypeptide is Probable DNA N(6)-methyladenine demethylase ALKBH1B (Arabidopsis thaliana (Mouse-ear cress)).